We begin with the raw amino-acid sequence, 213 residues long: Glycerol-3-phosphate acyltransferase (213 aa).

5 helical membrane passes run 3-23 (LLLF…LWIG), 68-88 (ILLP…GFFA), 112-132 (VLLG…VLVL), 134-154 (LFSM…LSVL), and 163-183 (LPNY…IIII).

This sequence belongs to the PlsY family. As to quaternary structure, probably interacts with PlsX.

The protein resides in the cell membrane. It catalyses the reaction an acyl phosphate + sn-glycerol 3-phosphate = a 1-acyl-sn-glycero-3-phosphate + phosphate. It participates in lipid metabolism; phospholipid metabolism. Catalyzes the transfer of an acyl group from acyl-phosphate (acyl-PO(4)) to glycerol-3-phosphate (G3P) to form lysophosphatidic acid (LPA). This enzyme utilizes acyl-phosphate as fatty acyl donor, but not acyl-CoA or acyl-ACP. This Streptococcus pyogenes serotype M28 (strain MGAS6180) protein is Glycerol-3-phosphate acyltransferase.